The primary structure comprises 440 residues: 23S rRNA (uracil(1939)-C(5))-methyltransferase RlmD (440 aa).

The TRAM domain maps to 10-68 (KALPTQAVEITIDNLDHHLTGVGRYQGKACFVEGVLPGEKVSVQITEQKKQYAHARLRQ). [4Fe-4S] cluster-binding residues include C81, C87, C90, and C169. Q272, F301, N306, E322, D349, and D372 together coordinate S-adenosyl-L-methionine. Residue C398 is the Nucleophile of the active site.

Belongs to the class I-like SAM-binding methyltransferase superfamily. RNA M5U methyltransferase family. RlmD subfamily.

The enzyme catalyses uridine(1939) in 23S rRNA + S-adenosyl-L-methionine = 5-methyluridine(1939) in 23S rRNA + S-adenosyl-L-homocysteine + H(+). In terms of biological role, catalyzes the formation of 5-methyl-uridine at position 1939 (m5U1939) in 23S rRNA. This is 23S rRNA (uracil(1939)-C(5))-methyltransferase RlmD from Tolumonas auensis (strain DSM 9187 / NBRC 110442 / TA 4).